Here is a 223-residue protein sequence, read N- to C-terminus: DNA mismatch repair protein MutH (223 aa).

This sequence belongs to the MutH family.

The protein localises to the cytoplasm. Its function is as follows. Sequence-specific endonuclease that cleaves unmethylated GATC sequences. It is involved in DNA mismatch repair. The chain is DNA mismatch repair protein MutH from Haemophilus influenzae (strain PittEE).